Consider the following 115-residue polypeptide: Large ribosomal subunit protein bL19 (115 aa).

It belongs to the bacterial ribosomal protein bL19 family.

Its function is as follows. This protein is located at the 30S-50S ribosomal subunit interface and may play a role in the structure and function of the aminoacyl-tRNA binding site. The sequence is that of Large ribosomal subunit protein bL19 from Lachnospira eligens (strain ATCC 27750 / DSM 3376 / VPI C15-48 / C15-B4) (Eubacterium eligens).